Reading from the N-terminus, the 546-residue chain is DNA replication factor Cdt1 (546 aa).

The segment covering 1–11 (MEQRRVTDFFA) has biased composition (basic and acidic residues). The PIP-box K+4 motif motif lies at 1 to 23 (MEQRRVTDFFARRRPGPPRIAPP). Disordered regions lie at residues 1-118 (MEQR…QDQD) and 143-165 (SAQD…PCGE). Low complexity predominate over residues 28–45 (RTPSPARPALRAPASATS). Phosphothreonine; by MAPK8 is present on threonine 29. Serine 31 is subject to Phosphoserine. A Cyclin-binding motif motif is present at residues 68–70 (RRL). Serine 93 is subject to Phosphoserine; by MAPK8. The tract at residues 150–190 (SCTPEAEGRPEEPCGEKAPAYQRFHALAQPGLPGLVLPYKY) is interaction with GMNN. Basic and acidic residues predominate over residues 155 to 164 (AEGRPEEPCG). Position 318 is a phosphoserine; by MAPK8 (serine 318). A phosphoserine mark is found at serine 380 and serine 394. The segment at 383–415 (ALRSAAPSSPGSPRPALPATPPATPPAASPSAL) is disordered. Residues 392 to 410 (PGSPRPALPATPPATPPAA) show a composition bias toward pro residues. An interaction with LRWD1 region spans residues 451–546 (LERLPELARV…AHQTRAEEGL (96 aa)).

The protein belongs to the Cdt1 family. As to quaternary structure, interacts with GMNN; the interaction inhibits binding of the MCM complex to origins of replication. Interacts with MCM6. Interacts with CDC6; are mutually dependent on one another for loading MCM complexes onto chromatin. Interacts with PCNA. Interacts with LRWD1 during G1 phase and during mitosis. Interacts with NDC80 subunit of the NDC80 complex; leading to kinetochore localization. Interacts with GRWD1; origin binding of GRWD1 is dependent on CDT1. Interacts with KAT7. Interacts with ubiquitin-binding protein FAF1; the interaction is likely to promote CDT1 degradation. In terms of processing, two independent E3 ubiquitin ligase complexes, SCF(SKP2) and the DCX(DTL) complex, mediated CDT1 degradation in S phase. Ubiquitinated by the DCX(DTL) complex, in response to DNA damage, leading to its degradation. Ubiquitination by the DCX(DTL) complex is necessary to ensure proper cell cycle regulation and is PCNA-dependent: interacts with PCNA via its PIP-box, while the presence of the containing the 'K+4' motif in the PIP box, recruit the DCX(DTL) complex, leading to its degradation. Phosphorylation at Thr-29 by CDK2 targets CDT1 for ubiquitination by SCF(SKP2) E3 ubiquitin ligase and subsequent degradation. The interaction with GMNN protects it against ubiquitination. Deubiquitinated by USP37. Ubiquitinated and degraded by the SCF(FBXO31) complex during the G2 phase to prevent re-replication. Phosphorylation by cyclin A-dependent kinases at Thr-29 targets CDT1 for ubiquitynation by SCF(SKP2) E3 ubiquitin ligase and subsequent degradation. Phosphorylated at Thr-29 by MAPK8/JNK1, which blocks replication licensing in response to stress. Binding to GMNN is not affected by phosphorylation.

It is found in the nucleus. The protein localises to the chromosome. It localises to the centromere. The protein resides in the kinetochore. Its function is as follows. Required for both DNA replication and mitosis. DNA replication licensing factor, required for pre-replication complex assembly. Cooperates with CDC6 and the origin recognition complex (ORC) during G1 phase of the cell cycle to promote the loading of the mini-chromosome maintenance (MCM) complex onto DNA to generate pre-replication complexes (pre-RC). Required also for mitosis by promoting stable kinetochore-microtubule attachments. Potential oncogene. The sequence is that of DNA replication factor Cdt1 from Homo sapiens (Human).